Reading from the N-terminus, the 88-residue chain is Small ribosomal subunit protein bS16 (88 aa).

The protein belongs to the bacterial ribosomal protein bS16 family.

The chain is Small ribosomal subunit protein bS16 from Leptospira interrogans serogroup Icterohaemorrhagiae serovar Lai (strain 56601).